The following is a 213-amino-acid chain: Putative 3-methyladenine DNA glycosylase (213 aa).

Belongs to the DNA glycosylase MPG family.

In Latilactobacillus sakei subsp. sakei (strain 23K) (Lactobacillus sakei subsp. sakei), this protein is Putative 3-methyladenine DNA glycosylase.